A 141-amino-acid chain; its full sequence is HTH-type transcriptional regulator MntR (141 aa).

One can recognise an HTH dtxR-type domain in the interval 1-63 (MPTPSMEDYI…YEKYRGLVLT (63 aa)). Residues aspartate 8, glutamate 11, histidine 77, glutamate 99, glutamate 102, and histidine 103 each contribute to the Mn(2+) site.

This sequence belongs to the DtxR/MntR family. As to quaternary structure, homodimer.

It is found in the cytoplasm. DNA binding is strongly activated by Mn(2+). In terms of biological role, central regulator of manganese homeostasis. This Geobacillus thermodenitrificans (strain NG80-2) protein is HTH-type transcriptional regulator MntR.